A 101-amino-acid polypeptide reads, in one-letter code: CRISPR-associated endoribonuclease Cas2 (101 aa).

D8 is a Mg(2+) binding site.

Belongs to the CRISPR-associated endoribonuclease Cas2 protein family. In terms of assembly, homodimer, forms a heterotetramer with a Cas1 homodimer. Requires Mg(2+) as cofactor.

CRISPR (clustered regularly interspaced short palindromic repeat), is an adaptive immune system that provides protection against mobile genetic elements (viruses, transposable elements and conjugative plasmids). CRISPR clusters contain sequences complementary to antecedent mobile elements and target invading nucleic acids. CRISPR clusters are transcribed and processed into CRISPR RNA (crRNA). Functions as a ssRNA-specific endoribonuclease. Involved in the integration of spacer DNA into the CRISPR cassette. In Lacticaseibacillus rhamnosus (strain ATCC 53103 / LMG 18243 / GG) (Lactobacillus rhamnosus), this protein is CRISPR-associated endoribonuclease Cas2.